A 357-amino-acid chain; its full sequence is Probable dual-specificity RNA methyltransferase RlmN (357 aa).

The active-site Proton acceptor is glutamate 95. In terms of domain architecture, Radical SAM core spans 106 to 340 (NRDRHTVCVS…VSVREEKGTD (235 aa)). Cysteines 113 and 345 form a disulfide. 3 residues coordinate [4Fe-4S] cluster: cysteine 120, cysteine 124, and cysteine 127. S-adenosyl-L-methionine-binding positions include 172–173 (GE), serine 204, 227–229 (SLH), and asparagine 302. Cysteine 345 functions as the S-methylcysteine intermediate in the catalytic mechanism.

This sequence belongs to the radical SAM superfamily. RlmN family. The cofactor is [4Fe-4S] cluster.

The protein resides in the cytoplasm. The catalysed reaction is adenosine(2503) in 23S rRNA + 2 reduced [2Fe-2S]-[ferredoxin] + 2 S-adenosyl-L-methionine = 2-methyladenosine(2503) in 23S rRNA + 5'-deoxyadenosine + L-methionine + 2 oxidized [2Fe-2S]-[ferredoxin] + S-adenosyl-L-homocysteine. The enzyme catalyses adenosine(37) in tRNA + 2 reduced [2Fe-2S]-[ferredoxin] + 2 S-adenosyl-L-methionine = 2-methyladenosine(37) in tRNA + 5'-deoxyadenosine + L-methionine + 2 oxidized [2Fe-2S]-[ferredoxin] + S-adenosyl-L-homocysteine. Specifically methylates position 2 of adenine 2503 in 23S rRNA and position 2 of adenine 37 in tRNAs. The protein is Probable dual-specificity RNA methyltransferase RlmN of Desulfitobacterium hafniense (strain DSM 10664 / DCB-2).